The chain runs to 180 residues: Large ribosomal subunit protein uL6 (180 aa).

The protein belongs to the universal ribosomal protein uL6 family. In terms of assembly, part of the 50S ribosomal subunit.

Functionally, this protein binds to the 23S rRNA, and is important in its secondary structure. It is located near the subunit interface in the base of the L7/L12 stalk, and near the tRNA binding site of the peptidyltransferase center. The sequence is that of Large ribosomal subunit protein uL6 from Clostridium tetani (strain Massachusetts / E88).